The following is a 622-amino-acid chain: MAAEKQVPGGGGGGGGGGGGGGGSGGGRGAGGEENKENERPSAGSKANREFGDSLSLEILQIIKESQQQHGLRHGDFQRYRGYCSRRQRRLRKTLNFKMGNRHKFTGKKVTEDLLTDNRYLLLVLMDAERAWSYAMQLKQEANTEPRKRFHLLSRLRKAVKHAEELERLCESNRVDAKTKLEAQAYTAYLSGMLRFEHQEWKAAIEAFNKCKTIYEKLASAFTEEQAVLYNQRVEEISPNIRYCAYNIGDQSAINELMQMRLRSGGTEGLLAEKLEALITQTRAKQAATMSEVEWRGRTVPVKIDKVRIFLLGLADNEAAIAQAESEETKERLFESMLSECRDAIQAVREELKPDQKQRDYTLDGESGKVSNLQYLHSYLTYIKLSTAIRRNENMAKGLQKALQQQPEDESKRSPRPQDLIRLYDIILQNLVELLQLPGLEEDRAFQKEIGLKTLVFKAYRCFFIAQSYVLVKKWSEALVLYDRVLKYANEVNSDAGAFRNSLKDLPDVQELITQVRSEKCSLQAAAILDASDSHQPETSSQVKDNKPLVERFETFCLDPSLVTKQANLVHFPPGFQPIPCKPLFFDLALNHVAFPPLEDKLEQKTKSGLTGYIKGIFGFRS.

The interval 1–50 is disordered; that stretch reads MAAEKQVPGGGGGGGGGGGGGGGSGGGRGAGGEENKENERPSAGSKANRE. Residues 1–231 are RNA-binding; it reads MAAEKQVPGG…FTEEQAVLYN (231 aa). Residues 8–30 are compositionally biased toward gly residues; the sequence is PGGGGGGGGGGGGGGGSGGGRGA. Basic and acidic residues predominate over residues 31-40; it reads GGEENKENER. Phosphoserine is present on residues S45 and S238. The residue at position 448 (K448) is an N6-acetyllysine. A required for interaction with SRP72 region spans residues 564–592; it reads TKQANLVHFPPGFQPIPCKPLFFDLALNH.

The protein belongs to the SRP68 family. As to quaternary structure, heterodimer with SRP72. SRP68/SRP72 heterodimer formation is stabilized by the presence of 7SL RNA. Component of a signal recognition particle complex that consists of a 7SL RNA molecule of 300 nucleotides and six protein subunits: SRP72, SRP68, SRP54, SRP19, SRP14 and SRP9. Within the SRP complex, interacts (via C-terminus) with SRP72.

The protein localises to the cytoplasm. The protein resides in the nucleus. It is found in the nucleolus. It localises to the endoplasmic reticulum. Functionally, component of the signal recognition particle (SRP) complex, a ribonucleoprotein complex that mediates the cotranslational targeting of secretory and membrane proteins to the endoplasmic reticulum (ER). The SRP complex interacts with the signal sequence in nascent secretory and membrane proteins and directs them to the membrane of the ER. The SRP complex targets the ribosome-nascent chain complex to the SRP receptor (SR), which is anchored in the ER, where SR compaction and GTPase rearrangement drive cotranslational protein translocation into the ER. Binds the signal recognition particle RNA (7S RNA), SRP72 binds to this complex subsequently. The SRP complex possibly participates in the elongation arrest function. This Canis lupus familiaris (Dog) protein is Signal recognition particle subunit SRP68 (SRP68).